Here is a 461-residue protein sequence, read N- to C-terminus: Photosystem II CP43 reaction center protein (461 aa).

A propeptide spanning residues Met1–Glu2 is cleaved from the precursor. Thr3 bears the N-acetylthreonine mark. Thr3 carries the post-translational modification Phosphothreonine. Helical transmembrane passes span Leu57–Ala81, Leu122–Asn143, Lys166–Ser188, Lys243–Ser263, and Trp279–Ala300. Glu355 contacts [CaMn4O5] cluster. A helical membrane pass occupies residues Arg435–Pro459.

This sequence belongs to the PsbB/PsbC family. PsbC subfamily. PSII is composed of 1 copy each of membrane proteins PsbA, PsbB, PsbC, PsbD, PsbE, PsbF, PsbH, PsbI, PsbJ, PsbK, PsbL, PsbM, PsbT, PsbX, PsbY, PsbZ, Psb30/Ycf12, at least 3 peripheral proteins of the oxygen-evolving complex and a large number of cofactors. It forms dimeric complexes. Binds multiple chlorophylls and provides some of the ligands for the Ca-4Mn-5O cluster of the oxygen-evolving complex. It may also provide a ligand for a Cl- that is required for oxygen evolution. PSII binds additional chlorophylls, carotenoids and specific lipids. is required as a cofactor.

Its subcellular location is the plastid. It localises to the chloroplast thylakoid membrane. One of the components of the core complex of photosystem II (PSII). It binds chlorophyll and helps catalyze the primary light-induced photochemical processes of PSII. PSII is a light-driven water:plastoquinone oxidoreductase, using light energy to abstract electrons from H(2)O, generating O(2) and a proton gradient subsequently used for ATP formation. The chain is Photosystem II CP43 reaction center protein from Oltmannsiellopsis viridis (Marine flagellate).